Here is a 121-residue protein sequence, read N- to C-terminus: Protein FAM241B (121 aa).

Residues 12 to 58 (QDDDPRVRTTTQPPRGSIPRQSFFNRGHGAPPGGPGPRQQQAGARLG) form a disordered region. Polar residues predominate over residues 19 to 35 (RTTTQPPRGSIPRQSFF). Position 33 is a phosphoserine (serine 33). A compositionally biased stretch (low complexity) spans 48 to 58 (PRQQQAGARLG). Serine 62 carries the phosphoserine modification. Residues 92 to 112 (ILLLFLLMMLGVRGLLLVGLV) traverse the membrane as a helical segment.

The protein belongs to the FAM241 family.

Its subcellular location is the membrane. Functionally, may play a role in lysosome homeostasis. The chain is Protein FAM241B from Homo sapiens (Human).